Reading from the N-terminus, the 495-residue chain is Acyltransferase abl6 (495 aa).

Residue His-171 is the Proton acceptor of the active site.

The protein belongs to the plant acyltransferase family.

In terms of biological role, acyltransferase; part of the gene cluster that mediates the biosynthesis of abscisic acid (ABA), a phytohormone that acts antagonistically toward salicylic acid (SA), jasmonic acid (JA) and ethylene (ETH) signaling, to impede plant defense responses. The first step of the pathway catalyzes the reaction from farnesyl diphosphate to alpha-ionylideneethane performed by the alpha-ionylideneethane synthase abl3 via a three-step reaction mechanism involving 2 neutral intermediates, beta-farnesene and allofarnesene. The cytochrome P450 monooxygenase abl1 might then be involved in the conversion of alpha-ionylideneethane to alpha-ionylideneacetic acid. Alpha-ionylideneacetic acid is further converted to abscisic acid in 2 steps involving the cytochrome P450 monooxygenase abl2 and the short-chain dehydrogenase/reductase abl4, via the intermediates 1'-deoxy-ABA or 1',4'-trans-diol-ABA, depending on the order of action of these 2 enzymes. Abl2 is responsible for the hydroxylation of carbon atom C-1' and abl4 might be involved in the oxidation of the C-4' carbon atom. The acyltransferase abl6 seems not essential for the biosynthesis of ABA, but it may acetylate ABA as part of the synthesis of another ABA-related molecule. The sequence is that of Acyltransferase abl6 from Leptosphaeria maculans (strain JN3 / isolate v23.1.3 / race Av1-4-5-6-7-8) (Blackleg fungus).